We begin with the raw amino-acid sequence, 162 residues long: uncharacterized protein (162 aa).

The protein belongs to the M.jannaschii MJ0150/MJ0739/MJ0745/MJ1460/MJ1642 family.

This is an uncharacterized protein from Methanocaldococcus jannaschii (strain ATCC 43067 / DSM 2661 / JAL-1 / JCM 10045 / NBRC 100440) (Methanococcus jannaschii).